The primary structure comprises 301 residues: Formylmethanofuran--tetrahydromethanopterin formyltransferase (301 aa).

This sequence belongs to the FTR family. Homotetramer.

The protein localises to the cytoplasm. It catalyses the reaction N-formylmethanofuran + 5,6,7,8-tetrahydromethanopterin + H(+) = N(5)-formyl-5,6,7,8-tetrahydromethanopterin + methanofuran. The protein operates within one-carbon metabolism; methanogenesis from CO(2); 5,10-methenyl-5,6,7,8-tetrahydromethanopterin from CO(2): step 2/3. In terms of biological role, catalyzes the reversible transfer of a formyl group from formylmethanofuran (formyl-MFR) to tetrahydromethanopterin (H(4)MPT) to produce 5-formyl tetrahydromethanopterin (5-formyl-H(4)MPT) and methanofuran (MFR). The sequence is that of Formylmethanofuran--tetrahydromethanopterin formyltransferase from Methanocaldococcus jannaschii (strain ATCC 43067 / DSM 2661 / JAL-1 / JCM 10045 / NBRC 100440) (Methanococcus jannaschii).